The following is a 713-amino-acid chain: Pro-neuregulin-3, membrane-bound isoform (713 aa).

Residues 1 to 362 lie on the Extracellular side of the membrane; it reads MSEGAAGASP…MESEDVYQRQ (362 aa). Disordered stretches follow at residues 28-48, 119-220, and 251-282; these read AAAA…AAEP, SSFP…STQA, and AAAS…TTYS. The span at 34 to 44 shows a compositional bias: gly residues; that stretch reads AGGGPDGGGEG. A compositionally biased stretch (low complexity) spans 127-148; that stretch reads TTTTTTSTTSPATPSAGGAASS. Over residues 149 to 163 the composition is skewed to polar residues; sequence RTPNRISTRLTTITR. Composition is skewed to low complexity over residues 195–207 and 254–274; these read STTA…STPG and SSSS…STSP. One can recognise an EGF-like domain in the interval 288 to 331; the sequence is HFKPCRDKDLAYCLNDGECFVIETLTGSHKHCRCKEGYQGVRCD. 3 disulfide bridges follow: C292-C306, C300-C319, and C321-C330. A helical membrane pass occupies residues 363–383; that stretch reads VLSISCIIFGIVIVGMFCAAF. Topologically, residues 384-713 are cytoplasmic; that stretch reads YFKSKKQAKQ…EIQRDSVLTK (330 aa). Positions 449-496 are disordered; the sequence is SAPQSFPEVTSPDRGSQPIKHHSPGQRSGMLHRNTFRRAPPSPRSRLG.

The protein belongs to the neuregulin family. As to quaternary structure, interacts with ERBB4. In terms of processing, proteolytic cleavage close to the plasma membrane on the external face leads to the release of the soluble growth factor form. Extensive glycosylation precedes the proteolytic cleavage. In terms of tissue distribution, expressed in sympathetic, motor, and sensory neurons.

The protein resides in the cell membrane. Its subcellular location is the secreted. In terms of biological role, direct ligand for the ERBB4 tyrosine kinase receptor. Binding results in ligand-stimulated tyrosine phosphorylation and activation of the receptor. Does not bind to the EGF receptor, ERBB2 or ERBB3 receptors. The polypeptide is Pro-neuregulin-3, membrane-bound isoform (Nrg3) (Mus musculus (Mouse)).